The chain runs to 376 residues: TraB domain-containing protein (376 aa).

Met-1 carries the N-acetylmethionine modification. Residues 1-34 (MDGEEQQPPHEANVEPVVPSEASEPVPRVLSGDP) are disordered. Positions 14–27 (VEPVVPSEASEPVP) are enriched in low complexity. Thr-65 carries the post-translational modification Phosphothreonine.

The chain is TraB domain-containing protein (TRABD) from Homo sapiens (Human).